The chain runs to 96 residues: Beta-defensin 20 (96 aa).

Residues 1–21 (MKLPQLLLILLFVVLADSVQP) form the signal peptide. 3 disulfide bridges follow: cysteine 24–cysteine 52, cysteine 32–cysteine 46, and cysteine 36–cysteine 53.

The protein belongs to the beta-defensin family.

Its subcellular location is the secreted. Has antibacterial activity. The sequence is that of Beta-defensin 20 (Defb20) from Rattus norvegicus (Rat).